We begin with the raw amino-acid sequence, 390 residues long: MEDPTLYIVERPLPGYPDAEAPEPSSAGAQAAEEPSGAGSEELIKSDQVNGVLVLSLLDKIIGAVDQIQLTQAQLEERQAEMEGAVQSIQGELSKLGKAHATTSNTVSKLLEKVRKVSVNVKTVRGSLERQAGQIKKLEVNEAELLRRRNFKVMIYQDEVKLPAKLSISKSLKESEALPEKEGEELGEGERPEEDAAALELSSDEAVEVEEVIEESRAERIKRSGLRRVDDFKKAFSKEKMEKTKVRTRENLEKTRLKTKENLEKTRHTLEKRMNKLGTRLVPAERREKLKTSRDKLRKSFTPDHVVYARSKTAVYKVPPFTFHVKKIREGQVEVLKATEMVEVGADDDEGGAERGEAGDLRRGSSPDVHALLEITEESDAVLVDKSDSD.

Residue Met-1 is modified to N-acetylmethionine. A disordered region spans residues 1-40 (MEDPTLYIVERPLPGYPDAEAPEPSSAGAQAAEEPSGAGS). Residues 1–98 (MEDPTLYIVE…IQGELSKLGK (98 aa)) are required for homotrimerization and for interaction with CAVIN2 and CAVIN3. The segment covering 22-40 (PEPSSAGAQAAEEPSGAGS) has biased composition (low complexity). 3 positions are modified to phosphoserine: Ser-36, Ser-40, and Ser-46. The interval 52-62 (VLVLSLLDKII) is nuclear export signal. The tract at residues 53–75 (LVLSLLDKIIGAVDQIQLTQAQL) is leucine-zipper 1. A Glycyl lysine isopeptide (Lys-Gly) (interchain with G-Cter in SUMO2) cross-link involves residue Lys-116. Ser-118 bears the Phosphoserine mark. Lys-122 participates in a covalent cross-link: Glycyl lysine isopeptide (Lys-Gly) (interchain with G-Cter in SUMO2). Positions 136–152 (KKLEVNEAELLRRRNFK) are nuclear localization signal. Tyr-156 is subject to Phosphotyrosine. Lys-161 participates in a covalent cross-link: Glycyl lysine isopeptide (Lys-Gly) (interchain with G-Cter in SUMO1); alternate. Lys-161 participates in a covalent cross-link: Glycyl lysine isopeptide (Lys-Gly) (interchain with G-Cter in SUMO2); alternate. Lys-165 participates in a covalent cross-link: Glycyl lysine isopeptide (Lys-Gly) (interchain with G-Cter in SUMO2). The tract at residues 166–186 (LSISKSLKESEALPEKEGEEL) is leucine-zipper 2. A phosphoserine mark is found at Ser-167 and Ser-169. Residue Lys-170 forms a Glycyl lysine isopeptide (Lys-Gly) (interchain with G-Cter in SUMO2) linkage. Phosphoserine occurs at positions 171 and 175. Residues 172–181 (LKESEALPEK) are compositionally biased toward basic and acidic residues. Residues 172–201 (LKESEALPEKEGEELGEGERPEEDAAALEL) are disordered. A compositionally biased stretch (acidic residues) spans 182 to 201 (EGEELGEGERPEEDAAALEL). Residues 199–282 (LELSSDEAVE…RMNKLGTRLV (84 aa)) adopt a coiled-coil conformation. Phosphoserine occurs at positions 202 and 203. The nuclear localization signal stretch occupies residues 233-249 (KKAFSKEKMEKTKVRTR). The segment at 257-297 (LKTKENLEKTRHTLEKRMNKLGTRLVPAERREKLKTSRDKL) is leucine-zipper 3. A Phosphoserine modification is found at Ser-300. Thr-302 is subject to Phosphothreonine. Tyr-308 carries the phosphotyrosine modification. A Glycyl lysine isopeptide (Lys-Gly) (interchain with G-Cter in SUMO2) cross-link involves residue Lys-326. Positions 344–366 (VGADDDEGGAERGEAGDLRRGSS) are disordered. Residues 352–365 (GAERGEAGDLRRGS) show a composition bias toward basic and acidic residues. A phosphoserine mark is found at Ser-365, Ser-366, Ser-379, Ser-387, and Ser-389.

The protein belongs to the CAVIN family. In terms of assembly, component of the CAVIN complex composed of CAVIN1, CAVIN2, CAVIN3 and CAVIN4. Homotrimer. Interacts with TTF1. Interacts with RNA polymerase I subunit POLR1A/RPA1. Binds the 3' end of pre-rRNA. Interacts with transcription factor ZNF148. Interacts with LIPE in the adipocyte cytoplasm. Interacts with CAV1 and CAVIN3. Interacts with CAVIN2. Interacts with CAVIN4 and CAV3. Phosphorylated. Present in active and inactive forms. Changes in phosphorylation pattern may alter activity. Phosphorylation at Tyr-156 is essential for its functionin the regulation of ribosomal transcriptional activity. Post-translationally, five truncated forms are found in the caveolae. These are thought to be the result of proteolysis and may be phosphorylation-dependent. In terms of processing, monoubiquitinated.

The protein resides in the membrane. Its subcellular location is the caveola. It is found in the cell membrane. The protein localises to the microsome. It localises to the endoplasmic reticulum. The protein resides in the cytoplasm. Its subcellular location is the cytosol. It is found in the mitochondrion. The protein localises to the nucleus. Functionally, plays an important role in caveolae formation and organization. Essential for the formation of caveolae in all tissues. Core component of the CAVIN complex which is essential for recruitment of the complex to the caveolae in presence of calveolin-1 (CAV1). Essential for normal oligomerization of CAV1. Promotes ribosomal transcriptional activity in response to metabolic challenges in the adipocytes and plays an important role in the formation of the ribosomal transcriptional loop. Dissociates transcription complexes paused by DNA-bound TTF1, thereby releasing both RNA polymerase I and pre-RNA from the template. The caveolae biogenesis pathway is required for the secretion of proteins such as GASK1A. This is Caveolae-associated protein 1 from Homo sapiens (Human).